The sequence spans 309 residues: Lipoyl synthase (309 aa).

7 residues coordinate [4Fe-4S] cluster: Cys-37, Cys-42, Cys-48, Cys-67, Cys-71, Cys-74, and Ser-281. Positions 53–270 constitute a Radical SAM core domain; it reads DGPGTATFML…RVAETEFGFL (218 aa).

The protein belongs to the radical SAM superfamily. Lipoyl synthase family. The cofactor is [4Fe-4S] cluster.

It localises to the cytoplasm. It catalyses the reaction [[Fe-S] cluster scaffold protein carrying a second [4Fe-4S](2+) cluster] + N(6)-octanoyl-L-lysyl-[protein] + 2 oxidized [2Fe-2S]-[ferredoxin] + 2 S-adenosyl-L-methionine + 4 H(+) = [[Fe-S] cluster scaffold protein] + N(6)-[(R)-dihydrolipoyl]-L-lysyl-[protein] + 4 Fe(3+) + 2 hydrogen sulfide + 2 5'-deoxyadenosine + 2 L-methionine + 2 reduced [2Fe-2S]-[ferredoxin]. The protein operates within protein modification; protein lipoylation via endogenous pathway; protein N(6)-(lipoyl)lysine from octanoyl-[acyl-carrier-protein]: step 2/2. Its function is as follows. Catalyzes the radical-mediated insertion of two sulfur atoms into the C-6 and C-8 positions of the octanoyl moiety bound to the lipoyl domains of lipoate-dependent enzymes, thereby converting the octanoylated domains into lipoylated derivatives. This Natronomonas pharaonis (strain ATCC 35678 / DSM 2160 / CIP 103997 / JCM 8858 / NBRC 14720 / NCIMB 2260 / Gabara) (Halobacterium pharaonis) protein is Lipoyl synthase.